The primary structure comprises 376 residues: MFKFQTNGFSGYAVRYSPFYDNKIAVATSANYGLVGNGRLYVLSIMDDGNIITDISYDTQDGLFGVAWSETNENHVLTSSGDGCVSLFDTTLKDYPVMKFTEHQREVFSVDWSNIDKNLFCSASWDGSVKVWSPGSNRNTSLLTLRSLASREEKTGRIEKPIPVVQPSQVPMSKTRPNIRNDNNDCVYDAKFSFHDPNIIMSCNSDSHLQLWDTRLPNPLFMDFVAHNGLEALSCDFNRYRPFVVASAGVDKLAKVWDTRMIQPNVHSRPPRALNKFMGHEFAIRKLAWSPHGPTQLLTCSYDMTVRVWNDSPSPTSRVGLLDGASQPHAPPCSKIFSAHTEFVMGCDWSLWGEPGWVVTTGWDEMVYVWNTQRLQ.

WD repeat units lie at residues 58–98 (DTQD…YPVM), 102–142 (EHQR…NTSL), 182–222 (DNND…PLFM), 226–267 (AHNG…PNVH), 279–319 (GHEF…TSRV), and 339–376 (AHTE…QRLQ).

The protein belongs to the WD repeat peroxin-7 family. Interacts with PEX20. In terms of processing, polyubiquitinated, leading to its degradation by the proteasome. Ubiquitination is dependent of PEX5 and PEX20 and takes place following recycling into the cytosol.

The protein localises to the cytoplasm. Its subcellular location is the cytosol. It localises to the peroxisome matrix. Its function is as follows. Receptor required for the peroxisomal import of proteins containing a C-terminal PTS2-type peroxisomal targeting signal, such as 3-oxoacyl-CoA thiolase. Specifically binds to cargo proteins containing a PTS2 peroxisomal targeting signal in the cytosol. Cargo protein-binding triggers interaction with PEX20 and formation of a ternary complex composed of PEX20 and PEX7 along with PTS2-containing cargo proteins, which is tranlocated into peroxisomes by passing through the peroxisomal docking complex. PEX7 receptor is then retrotranslocated into the cytosol, where it is ubiquitinated and degraded. The polypeptide is Peroxisomal targeting signal 2 receptor (Komagataella phaffii (strain GS115 / ATCC 20864) (Yeast)).